The following is a 154-amino-acid chain: NADPH-dependent 7-cyano-7-deazaguanine reductase (154 aa).

Residues Met-1 to Glu-24 form a disordered region. The active-site Thioimide intermediate is Cys-52. Asp-59 (proton donor) is an active-site residue. Substrate is bound by residues Val-74–Ser-76 and His-93–Glu-94.

This sequence belongs to the GTP cyclohydrolase I family. QueF type 1 subfamily.

It is found in the cytoplasm. The catalysed reaction is 7-aminomethyl-7-carbaguanine + 2 NADP(+) = 7-cyano-7-deazaguanine + 2 NADPH + 3 H(+). Its pathway is tRNA modification; tRNA-queuosine biosynthesis. In terms of biological role, catalyzes the NADPH-dependent reduction of 7-cyano-7-deazaguanine (preQ0) to 7-aminomethyl-7-deazaguanine (preQ1). In Sinorhizobium fredii (strain NBRC 101917 / NGR234), this protein is NADPH-dependent 7-cyano-7-deazaguanine reductase.